The sequence spans 615 residues: MPIQVLPPQLANQIAAGEVVERPASVVKELVENSLDAGATRIDIDIERGGAKLIRIRDNGCGIKKDELALALARHATSKIASLDDLEAIISLGFRGEALASISSVSRLTLTSRTAEQQEAWQAYAEGRDMDVTVKPAAHPVGTTLEVLDLFYNTPARRKFLRTEKTEFSHIDEIIRRIALARFDVTINLSHNGKIVRQYRAVPEGGQKERRLGAICGTAFLEQALAIEWQHGDLTLRGWVADPNHTTPALAEIQYCYVNGRMMRDRLINHAIRQACEDKLGADQQPAFVLYLEIDPHQVDVNVHPAKHEVRFHQSRLVHDFIYQGVLSVLQQQLETPLPLDDEPQPAPRAIPENRVAAGRNHFAEPAAREPVAPRYSPAPASGSRPAAPWPNAQPGYQKQQGEVYRQLLQTPAPMQKPKAPEPQEPALAANSQSFGRVLTIVHSDCALLERDGNISLLSLPVAERWLRQAQLTPGEAPVCAQPLLIPLRLKVSGEEKSALEKAQSALAELGIDFQSDAQHVTIRAVPLPLRQQNLQILIPELIGYLAKQSVFEPGNIAQWIARNLMSEHAQWSMAQAITLLADVERLCPQLVKTPPGGLLQSVDLHPAIKALKDE.

Residues 363 to 397 (FAEPAAREPVAPRYSPAPASGSRPAAPWPNAQPGY) form a disordered region. Over residues 364 to 387 (AEPAAREPVAPRYSPAPASGSRPA) the composition is skewed to low complexity.

The protein belongs to the DNA mismatch repair MutL/HexB family.

Its function is as follows. This protein is involved in the repair of mismatches in DNA. It is required for dam-dependent methyl-directed DNA mismatch repair. May act as a 'molecular matchmaker', a protein that promotes the formation of a stable complex between two or more DNA-binding proteins in an ATP-dependent manner without itself being part of a final effector complex. In Shigella flexneri, this protein is DNA mismatch repair protein MutL.